The primary structure comprises 354 residues: Uroporphyrinogen decarboxylase (354 aa).

Residues 27 to 31 (RQAGR), D77, Y154, T209, and H327 contribute to the substrate site.

It belongs to the uroporphyrinogen decarboxylase family. In terms of assembly, homodimer.

The protein localises to the cytoplasm. It carries out the reaction uroporphyrinogen III + 4 H(+) = coproporphyrinogen III + 4 CO2. It functions in the pathway porphyrin-containing compound metabolism; protoporphyrin-IX biosynthesis; coproporphyrinogen-III from 5-aminolevulinate: step 4/4. Catalyzes the decarboxylation of four acetate groups of uroporphyrinogen-III to yield coproporphyrinogen-III. In Klebsiella pneumoniae subsp. pneumoniae (strain ATCC 700721 / MGH 78578), this protein is Uroporphyrinogen decarboxylase.